The primary structure comprises 100 residues: Protein Tat (100 aa).

The tract at residues 1–24 (MDPIDPDLEPWKHPGSQPRTVCNN) is interaction with human CREBBP. The transactivation stretch occupies residues 1-48 (MDPIDPDLEPWKHPGSQPRTVCNNCYCKACCYHCIYCFTKKGLGISYG). Cys-22, Cys-25, and Cys-27 together coordinate Zn(2+). The cysteine-rich stretch occupies residues 22–37 (CNNCYCKACCYHCIYC). The residue at position 28 (Lys-28) is an N6-acetyllysine; by host PCAF. Zn(2+) contacts are provided by Cys-30, His-33, Cys-34, and Cys-37. Positions 38–48 (FTKKGLGISYG) are core. Over residues 48–58 (GRKKRTTRRRT) the composition is skewed to basic residues. The interval 48 to 100 (GRKKRTTRRRTAPAGSKNNQDSIPKQPLSQSRGNKEGSEKSTKEVASKTEADQ) is disordered. The Nuclear localization signal, RNA-binding (TAR), and protein transduction motif lies at 49–57 (RKKRTTRRR). An interaction with the host capping enzyme RNGTT region spans residues 49 to 87 (RKKRTTRRRTAPAGSKNNQDSIPKQPLSQSRGNKEGSEK). An N6-acetyllysine; by host EP300 and GCN5L2 mark is found at Lys-50 and Lys-51. Position 52 is an asymmetric dimethylarginine; by host PRMT6 (Arg-52). The segment covering 63–79 (SKNNQDSIPKQPLSQSR) has biased composition (polar residues). Lys-72 participates in a covalent cross-link: Glycyl lysine isopeptide (Lys-Gly) (interchain with G-Cter in ubiquitin). Residues 80–100 (GNKEGSEKSTKEVASKTEADQ) show a composition bias toward basic and acidic residues.

It belongs to the lentiviruses Tat family. In terms of assembly, interacts with host CCNT1. Associates with the P-TEFb complex composed at least of Tat, P-TEFb (CDK9 and CCNT1), TAR RNA, RNA Pol II. Recruits the HATs CREBBP, TAF1/TFIID, EP300, PCAF and GCN5L2. Interacts with host KAT5/Tip60; this interaction targets the latter to degradation. Interacts with the host deacetylase SIRT1. Interacts with host capping enzyme RNGTT; this interaction stimulates RNGTT. Binds to host KDR, and to the host integrins ITGAV/ITGB3 and ITGA5/ITGB1. Interacts with host KPNB1/importin beta-1 without previous binding to KPNA1/importin alpha-1. Interacts with EIF2AK2. Interacts with host nucleosome assembly protein NAP1L1; this interaction may be required for the transport of Tat within the nucleus, since the two proteins interact at the nuclear rim. Interacts with host C1QBP/SF2P32; this interaction involves lysine-acetylated Tat. Interacts with the host chemokine receptors CCR2, CCR3 and CXCR4. Interacts with host DPP4/CD26; this interaction may trigger an anti-proliferative effect. Interacts with host LDLR. Interacts with the host extracellular matrix metalloproteinase MMP1. Interacts with host PRMT6; this interaction mediates Tat's methylation. Interacts with, and is ubiquitinated by MDM2/Hdm2. Interacts with host PSMC3 and HTATIP2. Interacts with STAB1; this interaction may overcome SATB1-mediated repression of IL2 and IL2RA (interleukin) in T cells by binding to the same domain than HDAC1. Interacts (when acetylated) with human CDK13, thereby increasing HIV-1 mRNA splicing and promoting the production of the doubly spliced HIV-1 protein Nef. Interacts with host TBP; this interaction modulates the activity of transcriptional pre-initiation complex. Interacts with host RELA. In terms of processing, asymmetrical arginine methylation by host PRMT6 seems to diminish the transactivation capacity of Tat and affects the interaction with host CCNT1. Post-translationally, acetylation by EP300, CREBBP, GCN5L2/GCN5 and PCAF regulates the transactivation activity of Tat. EP300-mediated acetylation of Lys-50 promotes dissociation of Tat from the TAR RNA through the competitive binding to PCAF's bromodomain. In addition, the non-acetylated Tat's N-terminus can also interact with PCAF. PCAF-mediated acetylation of Lys-28 enhances Tat's binding to CCNT1. Lys-50 is deacetylated by SIRT1. Polyubiquitination by host MDM2 does not target Tat to degradation, but activates its transactivation function and fosters interaction with CCNT1 and TAR RNA. In terms of processing, phosphorylated by EIF2AK2 on serine and threonine residues adjacent to the basic region important for TAR RNA binding and function. Phosphorylation of Tat by EIF2AK2 is dependent on the prior activation of EIF2AK2 by dsRNA.

The protein localises to the host nucleus. It localises to the host nucleolus. The protein resides in the host cytoplasm. It is found in the secreted. Its function is as follows. Transcriptional activator that increases RNA Pol II processivity, thereby increasing the level of full-length viral transcripts. Recognizes a hairpin structure at the 5'-LTR of the nascent viral mRNAs referred to as the transactivation responsive RNA element (TAR) and recruits the cyclin T1-CDK9 complex (P-TEFb complex) that will in turn hyperphosphorylate the RNA polymerase II to allow efficient elongation. The CDK9 component of P-TEFb and other Tat-activated kinases hyperphosphorylate the C-terminus of RNA Pol II that becomes stabilized and much more processive. Other factors such as HTATSF1/Tat-SF1, SUPT5H/SPT5, and HTATIP2 are also important for Tat's function. Besides its effect on RNA Pol II processivity, Tat induces chromatin remodeling of proviral genes by recruiting the histone acetyltransferases (HATs) CREBBP, EP300 and PCAF to the chromatin. This also contributes to the increase in proviral transcription rate, especially when the provirus integrates in transcriptionally silent region of the host genome. To ensure maximal activation of the LTR, Tat mediates nuclear translocation of NF-kappa-B by interacting with host RELA. Through its interaction with host TBP, Tat may also modulate transcription initiation. Tat can reactivate a latently infected cell by penetrating in it and transactivating its LTR promoter. In the cytoplasm, Tat is thought to act as a translational activator of HIV-1 mRNAs. Extracellular circulating Tat can be endocytosed by surrounding uninfected cells via the binding to several surface receptors such as CD26, CXCR4, heparan sulfate proteoglycans (HSPG) or LDLR. Neurons are rarely infected, but they internalize Tat via their LDLR. Through its interaction with nuclear HATs, Tat is potentially able to control the acetylation-dependent cellular gene expression. Modulates the expression of many cellular genes involved in cell survival, proliferation or in coding for cytokines or cytokine receptors. Tat plays a role in T-cell and neurons apoptosis. Tat induced neurotoxicity and apoptosis probably contribute to neuroAIDS. Circulating Tat also acts as a chemokine-like and/or growth factor-like molecule that binds to specific receptors on the surface of the cells, affecting many cellular pathways. In the vascular system, Tat binds to ITGAV/ITGB3 and ITGA5/ITGB1 integrins dimers at the surface of endothelial cells and competes with bFGF for heparin-binding sites, leading to an excess of soluble bFGF. The polypeptide is Protein Tat (Pan (chimpanzees)).